The primary structure comprises 707 residues: Ornithine decarboxylase (707 aa).

The tract at residues 83 to 102 (NRNPLSRADSAAGREETAQT) is disordered. Lys288 carries the post-translational modification N6-(pyridoxal phosphate)lysine. Pyridoxal 5'-phosphate-binding positions include Ser421, Gly458, and 498 to 501 (EPGR). 561 to 562 (FD) is a substrate binding site. Cys634 acts as the Proton donor; shared with dimeric partner in catalysis. Substrate is bound at residue Asp635. Pyridoxal 5'-phosphate is bound at residue Tyr663.

This sequence belongs to the Orn/Lys/Arg decarboxylase class-II family. Homodimer. Only the dimer is catalytically active, as the active sites are constructed of residues from both monomers. Pyridoxal 5'-phosphate is required as a cofactor.

It catalyses the reaction L-ornithine + H(+) = putrescine + CO2. The protein operates within amine and polyamine biosynthesis; putrescine biosynthesis via L-ornithine pathway; putrescine from L-ornithine: step 1/1. Inhibited by antizyme (AZ) in response to polyamine levels. AZ inhibits the assembly of the functional homodimer by binding to ODC monomers and targeting them for ubiquitin-independent proteolytic destruction by the 26S proteasome. Inhibited by 1-amino-oxy-3-aminopropane (APA, an isosteric analog of putrescine). Irreversibly inhibited by alpha-difluoromethylornithine (DFMO, a curative agent of West African sleeping sickness). Its function is as follows. Catalyzes the first and rate-limiting step of polyamine biosynthesis that converts ornithine into putrescine, which is the precursor for the polyamines, spermidine and spermine. Polyamines are essential for cell proliferation and are implicated in cellular processes, ranging from DNA replication to apoptosis. In Leishmania donovani, this protein is Ornithine decarboxylase.